The chain runs to 509 residues: Circadian clock oscillator protein KaiC (509 aa).

KaiC domains are found at residues 1 to 243 (MKDK…IIVF) and 257 to 509 (IRIS…IEKN). Residues G45, T46, G47, K48, T49, S85, K220, L221, R222, T224, H226, D237, T286, G287, T288, G289, K290, and T291 each coordinate ATP. T49 contacts Mg(2+). Positions 291 and 314 each coordinate Mg(2+). W327 contributes to the ATP binding site. Position 427 is a phosphoserine; by autocatalysis (S427). T428 carries the post-translational modification Phosphothreonine; by autocatalysis. Residues R447, K453, M454, R455, S457, H459, and K461 each coordinate ATP.

It belongs to the KaiC family. Homohexamer; hexamerization is dependent on ATP-binding. Component of the KaiBC complex. KaiC interacts with SasA, activating its autokinase function and leading to RpaA activation. Mg(2+) is required as a cofactor. Phosphorylated on serine and threonine residues by autocatalysis. Has a 4 step phosphorylation cycle; the autokinase acts first on Thr-428, then Ser-427. When Ser-427 is modified KaiC switches to an autophosphatase mode, acting first on phospho-Thr-428 then phospho-Ser-427.

It catalyses the reaction L-seryl-[protein] + ATP = O-phospho-L-seryl-[protein] + ADP + H(+). It carries out the reaction L-threonyl-[protein] + ATP = O-phospho-L-threonyl-[protein] + ADP + H(+). The enzyme catalyses ATP + H2O = ADP + phosphate + H(+). In terms of biological role, central component of the KaiBC oscillator complex, which constitutes the main circadian regulator in cyanobacteria. Its composition changes during the circadian cycle to control KaiC phosphorylation. Autophosphorylates and has a weak ATPase activity; ATPase activity defines the circadian period. This is Circadian clock oscillator protein KaiC from Prochlorococcus marinus subsp. pastoris (strain CCMP1986 / NIES-2087 / MED4).